Here is a 356-residue protein sequence, read N- to C-terminus: tRNA N6-adenosine threonylcarbamoyltransferase (356 aa).

2 residues coordinate Fe cation: histidine 115 and histidine 119. Substrate contacts are provided by residues 138-142 (LVSGG), aspartate 171, glycine 184, and asparagine 283. Aspartate 311 lines the Fe cation pocket.

It belongs to the KAE1 / TsaD family. The cofactor is Fe(2+).

The protein resides in the cytoplasm. The catalysed reaction is L-threonylcarbamoyladenylate + adenosine(37) in tRNA = N(6)-L-threonylcarbamoyladenosine(37) in tRNA + AMP + H(+). In terms of biological role, required for the formation of a threonylcarbamoyl group on adenosine at position 37 (t(6)A37) in tRNAs that read codons beginning with adenine. Is involved in the transfer of the threonylcarbamoyl moiety of threonylcarbamoyl-AMP (TC-AMP) to the N6 group of A37, together with TsaE and TsaB. TsaD likely plays a direct catalytic role in this reaction. In Prochlorococcus marinus (strain MIT 9515), this protein is tRNA N6-adenosine threonylcarbamoyltransferase.